Reading from the N-terminus, the 963-residue chain is VPS35 endosomal protein-sorting factor-like (963 aa).

The interval 43-112 (SKTKKVSRKG…DKDENSFVGP (70 aa)) is disordered. Residues 51 to 72 (KGSTSSTSSSSSSSVIDPLSSV) show a composition bias toward low complexity. Ser265 bears the Phosphoserine mark. A helical membrane pass occupies residues 699–719 (AFVRACVAYCFITIPSLVGIF).

This sequence belongs to the VPS35L family. Component of the heterotrimeric retriever complex formed by VPS26C, VPS29 and VPS35L. Interacts with VPS29. Interacts with COMMD1, CCDC93 and CCDC22; associates with the CCC (COMMD/CCDC22/CCDC93) complex which contains at least COMMD1 (and possibly other COMM domain-containing proteins), CCDC22 and CCDC93. Interacts with WASHC1, WASHC2A and WASHC2C. Interacts with SNX17 and SNX31.

It localises to the membrane. The protein localises to the endosome. Functionally, acts as a component of the retriever complex. The retriever complex is a heterotrimeric complex related to retromer cargo-selective complex (CSC) and essential for retromer-independent retrieval and recycling of numerous cargos such as integrin alpha-5/beta-1 (ITGA5:ITGB1). The recruitment of the retriever complex to the endosomal membrane involves CCC and WASH complexes. In the endosomes, drives the retrieval and recycling of NxxY-motif-containing cargo proteins by coupling to SNX17, a cargo essential for the homeostatic maintenance of numerous cell surface proteins associated with processes that include cell migration, cell adhesion, nutrient supply and cell signaling. Involved in copper-dependent ATP7A trafficking between the trans-Golgi network and vesicles in the cell periphery; the function is proposed to depend on its association with the CCC complex and cooperation with the WASH complex on early endosomes. Seems not to be required for CCC complex stability. The sequence is that of VPS35 endosomal protein-sorting factor-like from Mus musculus (Mouse).